The following is a 190-amino-acid chain: Putative cyclic ADP-D-ribose synthase ThsB (190 aa).

Belongs to the Thoeris B TIR-like family. Homodimer.

Its subcellular location is the cytoplasm. Its activity is regulated as follows. Activated upon phage infection. In terms of biological role, TIR-like domain-containing component of the Thoeris antiviral defense system, composed of ThsA and ThsB. Expression of ThsA and ThsB in B.subtilis (strain BEST7003) confers resistance to phages SBSphiC, SBSphiJ and SPO1. Phage infection activates this protein, generating a signal molecule that in turn activates ThsA. Functionally, probably hydrolyzes NAD(+) to make a cyclic ADP-D-ribose (cADPR) signaling molecule; might make 3'cADPR. The chain is Putative cyclic ADP-D-ribose synthase ThsB from Bacillus amyloliquefaciens (strain Y2) (Bacillus amyloliquefaciens subsp. plantarum (strain B9601-Y2)).